Reading from the N-terminus, the 544-residue chain is Chaperonin GroEL (544 aa).

ATP is bound by residues 29-32 (TLGP), Lys50, 86-90 (DGTTT), Gly414, 479-481 (DAA), and Asp495.

The protein belongs to the chaperonin (HSP60) family. Forms a cylinder of 14 subunits composed of two heptameric rings stacked back-to-back. Interacts with the co-chaperonin GroES.

It is found in the cytoplasm. It catalyses the reaction ATP + H2O + a folded polypeptide = ADP + phosphate + an unfolded polypeptide.. In terms of biological role, together with its co-chaperonin GroES, plays an essential role in assisting protein folding. The GroEL-GroES system forms a nano-cage that allows encapsulation of the non-native substrate proteins and provides a physical environment optimized to promote and accelerate protein folding. The polypeptide is Chaperonin GroEL (Treponema denticola (strain ATCC 35405 / DSM 14222 / CIP 103919 / JCM 8153 / KCTC 15104)).